The primary structure comprises 312 residues: Malate dehydrogenase (312 aa).

NAD(+) is bound by residues 7 to 13 and Asp-34; that span reads GAAGGIG. Substrate-binding residues include Arg-81 and Arg-87. Residues Asn-94 and 117–119 contribute to the NAD(+) site; that span reads ITN. Substrate-binding residues include Asn-119 and Arg-153. His-177 acts as the Proton acceptor in catalysis. Met-227 is a binding site for NAD(+).

It belongs to the LDH/MDH superfamily. MDH type 1 family. In terms of assembly, homodimer.

It catalyses the reaction (S)-malate + NAD(+) = oxaloacetate + NADH + H(+). Its function is as follows. Catalyzes the reversible oxidation of malate to oxaloacetate. This chain is Malate dehydrogenase, found in Salmonella newport (strain SL254).